The primary structure comprises 675 residues: UvrABC system protein B (675 aa).

The 386-residue stretch at 32–417 folds into the Helicase ATP-binding domain; it reads EGLSDGLAYQ…EHAGQVVEQV (386 aa). 45-52 is an ATP binding site; that stretch reads GVTGSGKT. The short motif at 98-121 is the Beta-hairpin element; that stretch reads YYDYYQPEAYVPSRDLFIEKDSAI. One can recognise a Helicase C-terminal domain in the interval 436-602; sequence QVDDLMSEIN…QIKKQVKDII (167 aa). The region spanning 634–669 is the UVR domain; it reads IKEIAKLEKAMQQAARDLQFEEAAVLRDRIRNIKEN.

Belongs to the UvrB family. As to quaternary structure, forms a heterotetramer with UvrA during the search for lesions. Interacts with UvrC in an incision complex.

It is found in the cytoplasm. Functionally, the UvrABC repair system catalyzes the recognition and processing of DNA lesions. A damage recognition complex composed of 2 UvrA and 2 UvrB subunits scans DNA for abnormalities. Upon binding of the UvrA(2)B(2) complex to a putative damaged site, the DNA wraps around one UvrB monomer. DNA wrap is dependent on ATP binding by UvrB and probably causes local melting of the DNA helix, facilitating insertion of UvrB beta-hairpin between the DNA strands. Then UvrB probes one DNA strand for the presence of a lesion. If a lesion is found the UvrA subunits dissociate and the UvrB-DNA preincision complex is formed. This complex is subsequently bound by UvrC and the second UvrB is released. If no lesion is found, the DNA wraps around the other UvrB subunit that will check the other stand for damage. The sequence is that of UvrABC system protein B from Neisseria meningitidis serogroup A / serotype 4A (strain DSM 15465 / Z2491).